A 351-amino-acid chain; its full sequence is Peptide chain release factor 1 (351 aa).

Q229 is modified (N5-methylglutamine).

It belongs to the prokaryotic/mitochondrial release factor family. Methylated by PrmC. Methylation increases the termination efficiency of RF1.

It localises to the cytoplasm. Its function is as follows. Peptide chain release factor 1 directs the termination of translation in response to the peptide chain termination codons UAG and UAA. This Cereibacter sphaeroides (strain ATCC 17025 / ATH 2.4.3) (Rhodobacter sphaeroides) protein is Peptide chain release factor 1.